We begin with the raw amino-acid sequence, 750 residues long: MAQASRSGSLPPLVIVPPLRAQPGGTGEEQWERSRTGGLRWEVHCWPSGTSGGTPWWPTPADVSEDYEADAAAWRRGPAGGGPIPPALQRLRAVLLRLHREREQLLQARDCAYHLQSAVRLMKTLSPGSPSGGPSPLPQWCRDLQLHPSQGAVLRIGPGETLEPLLLARPIGLAAQCLEAVIEMQLRALGREPASPGLSSQLAELLFALPAYHTLQRKALSHVPGAARPFPTSRVLRLLTGERGCQVASRLDEALQGSALRDQLRRRCQEEGDLLPGLLGLVGGVAGSASCGLGLGGAGALWSQYWTLLWAACAQSLDLNLGPWRDPRATAQQLSQALGQASLPQECEKELASLCHRLLHQSLIWSWDQGFCQALGSALGGQSSLPTSSGTAELLQQLFPPLLDALREPRLRRIFCQPADPAPVALGLCTLQTTLLWFLGRAQQYLAAWDPASFLLLIQKDLPPLLHEAEALYSLASEESLALEVEQQLGLEIQKLTAQIQLLPEESLSVFSQECHKQAMQGFKLYMPRGRYWRLRLCPEPPSAPSEYAGLVVRTVLEPVLQGLQGLPPQAQAPALGQALTAIVGAWLDHILTHGIRFSLQGALQLKQDFGVVRELLEEEQWSLSPDLRQTLLMLSIFQQLDGALLCLLQQPLPKSQVHRRPPCCCACQEVQTTKLPSSCLNSLESLEPPLQPGTSPAQTGQLQSTLGGRGPSPEGYLVGNQQAWLALRQHQRPRWHLPFFSCLGTSPES.

The segment at 1-29 is disordered; the sequence is MAQASRSGSLPPLVIVPPLRAQPGGTGEE. A coiled-coil region spans residues 87 to 110; the sequence is ALQRLRAVLLRLHREREQLLQARD. Residues 687-714 are disordered; that stretch reads LEPPLQPGTSPAQTGQLQSTLGGRGPSP. The span at 693-707 shows a compositional bias: polar residues; that stretch reads PGTSPAQTGQLQSTL.

The sequence is that of Coiled-coil domain-containing protein 142 (CCDC142) from Homo sapiens (Human).